Reading from the N-terminus, the 344-residue chain is Lysophosphatidic acid receptor 6 (344 aa).

Topologically, residues 1–25 (MVSSNGSQCPYDDSFKYTLYGCMFS) are extracellular. The N-linked (GlcNAc...) asparagine glycan is linked to asparagine 5. A helical membrane pass occupies residues 26-46 (MVFVLGLISNCVAIYIFICAL). Topologically, residues 47-56 (KVRNETTTYM) are cytoplasmic. Residues 57–77 (INLAMSDLLFVFTLPFRIFYF) form a helical membrane-spanning segment. Over 78 to 90 (ATRNWPFGDLLCK) the chain is Extracellular. Cysteine 89 and cysteine 168 are disulfide-bonded. A helical transmembrane segment spans residues 91 to 111 (ISVMLFYTNMYGSILFLTCIS). At 112-134 (VDRFLAIVYPFKSKTLRTKRNAK) the chain is on the cytoplasmic side. Residues 135-155 (IVCIAVWFTVMGGSAPAVFFQ) traverse the membrane as a helical segment. The Extracellular segment spans residues 156–183 (STHSQGNNTSEACFENFPAATWKTYLSR). 2 N-linked (GlcNAc...) asparagine glycosylation sites follow: asparagine 162 and asparagine 163. The helical transmembrane segment at 184–204 (IVIFIEIVGFFIPLILNVTCS) threads the bilayer. The Cytoplasmic segment spans residues 205–230 (SMVLRTLNKPVTLSRSKMNKTKVLKM). Residues 231–251 (IFVHLVIFCFCFVPYNINLIL) traverse the membrane as a helical segment. Residues 252 to 272 (YSLMRTQTFVNCSVVAAVRTM) lie on the Extracellular side of the membrane. Asparagine 262 carries an N-linked (GlcNAc...) asparagine glycan. A helical transmembrane segment spans residues 273-293 (YPITLCIAVSNCCFDPIVYYF). Cysteine 284 carries S-palmitoyl cysteine lipidation. Topologically, residues 294–344 (TSDTIQNSIKMKNWSVRRSDSRFSEVQGTENFIQHNLQTLKNKIFDNESAI) are cytoplasmic.

It belongs to the G-protein coupled receptor 1 family. In terms of tissue distribution, ubiquitously expressed. Detected in the hair follicles and skin (at protein level).

It is found in the cell membrane. Its function is as follows. Binds to oleoyl-L-alpha-lysophosphatidic acid (LPA). Intracellular cAMP is involved in the receptor activation. Important for the maintenance of hair growth and texture. The sequence is that of Lysophosphatidic acid receptor 6 (Lpar6) from Mus musculus (Mouse).